Reading from the N-terminus, the 738-residue chain is NAD(P)H-quinone oxidoreductase subunit 5, chloroplastic (738 aa).

The next 17 helical transmembrane spans lie at 9-29 (WVIPLLPLPVIMSMGFGLFLI), 39-59 (IWAFPSILLLSIAMVFSLHLS), 89-109 (VDPLTSIMLILITTVGILVLI), 125-145 (FVYISFFNTSMLGLVTSSNLI), 147-167 (IYFFWELVGMCSYLLIGFWFT), 185-205 (GDFGLLLGILGFFWITGSLEF), 219-239 (NGINSLLTTLCAFLLFLGAVA), 258-278 (TPISALIHAATMVAAGIFLLA), 280-300 (LLPLFISLPLIMSFISLVGTI), 327-347 (LGYMMLALGIGSYQAALFHLI), 354-374 (ALLFLGSGSVIHSMEPLVGYS), 396-416 (TTFLCGTLSLCGIPPLACFWS), 425-445 (WLYSPFFGIIASFTAGLTAFY), 542-562 (LFPLLILLLFTLFIGSIGIPF), 610-630 (SLAIFGLFIAYIFYGSAYSFF), 691-711 (GVIDGIINGVGLAGFCIGEEI), and 717-737 (GRISSYLFFFLCYVSLFLFFI).

This sequence belongs to the complex I subunit 5 family. In terms of assembly, NDH is composed of at least 16 different subunits, 5 of which are encoded in the nucleus.

Its subcellular location is the plastid. It is found in the chloroplast thylakoid membrane. The enzyme catalyses a plastoquinone + NADH + (n+1) H(+)(in) = a plastoquinol + NAD(+) + n H(+)(out). It catalyses the reaction a plastoquinone + NADPH + (n+1) H(+)(in) = a plastoquinol + NADP(+) + n H(+)(out). In terms of biological role, NDH shuttles electrons from NAD(P)H:plastoquinone, via FMN and iron-sulfur (Fe-S) centers, to quinones in the photosynthetic chain and possibly in a chloroplast respiratory chain. The immediate electron acceptor for the enzyme in this species is believed to be plastoquinone. Couples the redox reaction to proton translocation, and thus conserves the redox energy in a proton gradient. The chain is NAD(P)H-quinone oxidoreductase subunit 5, chloroplastic (ndhF) from Sorghum bicolor (Sorghum).